Reading from the N-terminus, the 385-residue chain is NADH-quinone oxidoreductase subunit H (385 aa).

8 helical membrane passes run 14–34 (GLKLVVIFLMMVQAVPILVWL), 80–100 (FLYYAAPIFALIPGAVAFSAI), 130–150 (IGVGIVFILGVSSLAAYTLLM), 172–192 (ISYELALGLSIVGVIMLYGTF), 219–239 (LPNWGIFYQPVGALLFFSAAF), 280–300 (MMIASGLMVLFFFGGYTIPYV), 325–345 (LIHFLVFNIKFGFFMWVFIWV), and 365–385 (MLPWALANTIITAFVIYIASL).

This sequence belongs to the complex I subunit 1 family. NDH-1 is composed of 14 different subunits. Subunits NuoA, H, J, K, L, M, N constitute the membrane sector of the complex.

The protein localises to the cell inner membrane. It catalyses the reaction a quinone + NADH + 5 H(+)(in) = a quinol + NAD(+) + 4 H(+)(out). In terms of biological role, NDH-1 shuttles electrons from NADH, via FMN and iron-sulfur (Fe-S) centers, to quinones in the respiratory chain. The immediate electron acceptor for the enzyme in this species is believed to be ubiquinone. Couples the redox reaction to proton translocation (for every two electrons transferred, four hydrogen ions are translocated across the cytoplasmic membrane), and thus conserves the redox energy in a proton gradient. This subunit may bind ubiquinone. The sequence is that of NADH-quinone oxidoreductase subunit H from Bdellovibrio bacteriovorus (strain ATCC 15356 / DSM 50701 / NCIMB 9529 / HD100).